The following is a 377-amino-acid chain: Nitric oxide reductase FlRd-NAD(+) reductase (377 aa).

It belongs to the FAD-dependent oxidoreductase family. FAD is required as a cofactor.

It is found in the cytoplasm. The catalysed reaction is 2 reduced [nitric oxide reductase rubredoxin domain] + NAD(+) + H(+) = 2 oxidized [nitric oxide reductase rubredoxin domain] + NADH. Its pathway is nitrogen metabolism; nitric oxide reduction. One of at least two accessory proteins for anaerobic nitric oxide (NO) reductase. Reduces the rubredoxin moiety of NO reductase. The chain is Nitric oxide reductase FlRd-NAD(+) reductase from Escherichia coli O45:K1 (strain S88 / ExPEC).